We begin with the raw amino-acid sequence, 216 residues long: Probable nicotinate-nucleotide adenylyltransferase (216 aa).

It belongs to the NadD family.

It carries out the reaction nicotinate beta-D-ribonucleotide + ATP + H(+) = deamido-NAD(+) + diphosphate. The protein operates within cofactor biosynthesis; NAD(+) biosynthesis; deamido-NAD(+) from nicotinate D-ribonucleotide: step 1/1. Catalyzes the reversible adenylation of nicotinate mononucleotide (NaMN) to nicotinic acid adenine dinucleotide (NaAD). This Maridesulfovibrio salexigens (strain ATCC 14822 / DSM 2638 / NCIMB 8403 / VKM B-1763) (Desulfovibrio salexigens) protein is Probable nicotinate-nucleotide adenylyltransferase.